Reading from the N-terminus, the 215-residue chain is Cytochrome b6 (215 aa).

The helical transmembrane segment at 32-52 (IFYCLGGITLTCFLVQVATGF) threads the bilayer. Heme c is bound at residue Cys35. Residues His86 and His100 each contribute to the heme b site. 3 helical membrane passes run 90–110 (ASMM…TGGF), 116–136 (LTWI…VTGY), and 186–206 (LHTF…FLMI). Heme b is bound by residues His187 and His202.

Belongs to the cytochrome b family. PetB subfamily. In terms of assembly, the 4 large subunits of the cytochrome b6-f complex are cytochrome b6, subunit IV (17 kDa polypeptide, PetD), cytochrome f and the Rieske protein, while the 4 small subunits are PetG, PetL, PetM and PetN. The complex functions as a dimer. Heme b serves as cofactor. Requires heme c as cofactor.

It is found in the plastid. It localises to the chloroplast thylakoid membrane. Its function is as follows. Component of the cytochrome b6-f complex, which mediates electron transfer between photosystem II (PSII) and photosystem I (PSI), cyclic electron flow around PSI, and state transitions. The polypeptide is Cytochrome b6 (Psilotum nudum (Whisk fern)).